The sequence spans 185 residues: Capsid protein (185 aa).

Residues 136-185 (NAPILSTLPETTVVRRRDRGRSPRRRTPSPRRRRSQSPRRRRSQSRESQC) are disordered. Over residues 149–178 (VRRRDRGRSPRRRTPSPRRRRSQSPRRRRS) the composition is skewed to basic residues. Residues serine 157, serine 164, and serine 172 each carry the phosphoserine; by host modification. Residues 157-163 (SPRRRTP) form a 1; half-length repeat. Positions 157-179 (SPRRRTPSPRRRRSQSPRRRRSQ) are 3 X 8 AA repeats of S-P-R-R-R-[PR]-S-Q. The Bipartite nuclear localization signal signature appears at 160–177 (RRTPSPRRRRSQSPRRRR). Tandem repeats lie at residues 164–171 (SPRRRRSQ) and 172–179 (SPRRRRSQ). Residues 179-185 (QSRESQC) form an RNA binding region.

This sequence belongs to the orthohepadnavirus core antigen family. In terms of assembly, homodimerizes, then multimerizes. Interacts with cytosol exposed regions of viral L glycoprotein present in the reticulum-to-Golgi compartment. Interacts with human FLNB. Phosphorylated form interacts with host importin alpha; this interaction depends on the exposure of the NLS, which itself depends upon genome maturation and/or phosphorylation of the capsid protein. Interacts with host NUP153. Post-translationally, phosphorylated by host SRPK1, SRPK2, and maybe protein kinase C or GAPDH. Phosphorylation is critical for pregenomic RNA packaging. Protein kinase C phosphorylation is stimulated by HBx protein and may play a role in transport of the viral genome to the nucleus at the late step during the viral replication cycle.

It is found in the virion. The protein resides in the host cytoplasm. Functionally, self assembles to form an icosahedral capsid. Most capsids appear to be large particles with an icosahedral symmetry of T=4 and consist of 240 copies of capsid protein, though a fraction forms smaller T=3 particles consisting of 180 capsid proteins. Entering capsids are transported along microtubules to the nucleus. Phosphorylation of the capsid is thought to induce exposure of nuclear localization signal in the C-terminal portion of the capsid protein that allows binding to the nuclear pore complex via the importin (karyopherin-) alpha and beta. Capsids are imported in intact form through the nuclear pore into the nuclear basket, where it probably binds NUP153. Only capsids that contain the mature viral genome can release the viral DNA and capsid protein into the nucleoplasm. Immature capsids get stuck in the basket. Capsids encapsulate the pre-genomic RNA and the P protein. Pre-genomic RNA is reverse-transcribed into DNA while the capsid is still in the cytoplasm. The capsid can then either be directed to the nucleus, providing more genomes for transcription, or bud through the endoplasmic reticulum to provide new virions. In Homo sapiens (Human), this protein is Capsid protein.